The following is a 343-amino-acid chain: NAD-dependent deacetylase sir2E (343 aa).

A Deacetylase sirtuin-type domain is found at 27 to 300; sequence YLKNKKEFEF…PLLERQLLYE (274 aa). The Proton acceptor role is filled by His-152. 4 residues coordinate Zn(2+): Cys-160, Cys-165, Cys-200, and Cys-203.

The protein belongs to the sirtuin family.

Its subcellular location is the nucleus. It carries out the reaction N(6)-acetyl-L-lysyl-[protein] + NAD(+) + H2O = 2''-O-acetyl-ADP-D-ribose + nicotinamide + L-lysyl-[protein]. Its function is as follows. NAD-dependent deacetylase, which plays an important role in the regulation of transcriptional repression. May play a role in cell cycle. When overexpressed, the cell cycle is accelerated. The sequence is that of NAD-dependent deacetylase sir2E (sir2E) from Dictyostelium discoideum (Social amoeba).